Reading from the N-terminus, the 580-residue chain is PX domain-containing protein kinase-like protein (580 aa).

The region spanning Leu14–Ala126 is the PX domain. One can recognise a Protein kinase domain in the interval Phe88–Lys481. A disordered region spans residues Glu433–Arg551. 2 stretches are compositionally biased toward basic residues: residues Ile437 to Ser448 and Lys457 to Arg469. Residues Ser483 to Ala514 show a composition bias toward low complexity. Residues Leu515–Pro531 show a composition bias toward pro residues. A WH2 domain is found at Val549–Lys568.

This sequence belongs to the protein kinase superfamily.

It localises to the cytoplasm. It is found in the cell membrane. Its function is as follows. Binds to and modulates brain Na,K-ATPase subunits ATP1B1 and ATP1B3 and may thereby participate in the regulation of electrical excitability and synaptic transmission. May not display kinase activity. In Rattus norvegicus (Rat), this protein is PX domain-containing protein kinase-like protein.